The primary structure comprises 578 residues: Arginine--tRNA ligase (578 aa).

The 'HIGH' region signature appears at 127–137; the sequence is PNLAKEMHVGH.

Belongs to the class-I aminoacyl-tRNA synthetase family. Monomer.

It is found in the cytoplasm. It catalyses the reaction tRNA(Arg) + L-arginine + ATP = L-arginyl-tRNA(Arg) + AMP + diphosphate. The chain is Arginine--tRNA ligase from Pseudomonas putida (strain ATCC 47054 / DSM 6125 / CFBP 8728 / NCIMB 11950 / KT2440).